The sequence spans 35 residues: Conotoxin Cl6.16 (35 aa).

3 disulfide bridges follow: Cys-10–Cys-22, Cys-16–Cys-27, and Cys-21–Cys-34.

As to expression, expressed by the venom duct.

Its subcellular location is the secreted. In Californiconus californicus (California cone), this protein is Conotoxin Cl6.16.